A 154-amino-acid chain; its full sequence is Probable biofilm-surface layer protein B (154 aa).

An N-terminal signal peptide occupies residues 1–30 (MLKRTSFVSSLFISSAVLLSILLPSGQAHA).

The protein belongs to the BslA/BslB family. In terms of assembly, monomer in vitro.

The protein localises to the secreted. In terms of biological role, has a minor role in biofilm architecture. May contribute to the surface hydrophobicity. This is Probable biofilm-surface layer protein B from Bacillus subtilis (strain 168).